The primary structure comprises 159 residues: ATP synthase subunit b (159 aa).

The chain crosses the membrane as a helical span at residues 2–22; that stretch reads NISIPQIIAAILNFIILLLIV.

Belongs to the ATPase B chain family. In terms of assembly, F-type ATPases have 2 components, F(1) - the catalytic core - and F(0) - the membrane proton channel. F(1) has five subunits: alpha(3), beta(3), gamma(1), delta(1), epsilon(1). F(0) has three main subunits: a(1), b(2) and c(10-14). The alpha and beta chains form an alternating ring which encloses part of the gamma chain. F(1) is attached to F(0) by a central stalk formed by the gamma and epsilon chains, while a peripheral stalk is formed by the delta and b chains.

It localises to the cell membrane. Its function is as follows. F(1)F(0) ATP synthase produces ATP from ADP in the presence of a proton or sodium gradient. F-type ATPases consist of two structural domains, F(1) containing the extramembraneous catalytic core and F(0) containing the membrane proton channel, linked together by a central stalk and a peripheral stalk. During catalysis, ATP synthesis in the catalytic domain of F(1) is coupled via a rotary mechanism of the central stalk subunits to proton translocation. Component of the F(0) channel, it forms part of the peripheral stalk, linking F(1) to F(0). The chain is ATP synthase subunit b from Clostridium botulinum (strain Loch Maree / Type A3).